Here is a 932-residue protein sequence, read N- to C-terminus: MPRHHAGGEEGGAAGLWVKSGAAAAAAGGGRLGSGMKDVESGRGRVLLNSAAARGDGLLLLGTRAATLGGGGGGLRESRRGKQGARMSLLGKPLSYTSSQSCRRNVKYRRVQNYLYNVLERPRGWAFIYHAFVFLLVFGCLILSVFSTIPEHTKLASSCLLILEFVMIVVFGLEFIIRIWSAGCCCRYRGWQGRLRFARKPFCVIDTIVLIASIAVVSAKTQGNIFATSALRSLRFLQILRMVRMDRRGGTWKLLGSVVYAHSKELITAWYIGFLVLIFSSFLVYLVEKDANKEFSTYADALWWGTITLTTIGYGDKTPLTWLGRLLSAGFALLGISFFALPAGILGSGFALKVQEQHRQKHFEKRRNPAANLIQCVWRSYAADEKSVSIATWKPHLKALHTCSPTKKEQGEASSSQKLSFKERVRMASPRGQSIKSRQASVGDRRSPSTDITAEGSPTKVQKSWSFNDRTRFRPSLRLKSSQPKPVIDADTALGTDDVYDEKGCQCDVSVEDLTPPLKTVIRAIRIMKFHVAKRKFKETLRPYDVKDVIEQYSAGHLDMLCRIKSLQTRVDQILGKGQITSDKKSREKITAEHETTDDLSMLGRVVKVEKQVQSIESKLDCLLDIYQQVLRKGSASALALASFQIPPFECEQTSDYQSPVDSKDLSGSAQNSGCLSRSTSANISRGLQFILTPNEFSAQTFYALSPTMHSQATQVPISQSDGSAVAATNTIANQINTAPKPAAPTTLQIPPPLPAIKHLPRPETLHPNPAGLQESISDVTTCLVASKENVQVAQSNLTKDRSMRKSFDMGGETLLSVCPMVPKDLGKSLSVQNLIRSTEELNIQLSGSESSGSRGSQDFYPKWRESKLFITDEEVGPEETETDTFDAAPQPAREAAFASDSLRTGRSRSSQSICKAGESTDALSLPHVKLK.

Topologically, residues 1–125 are cytoplasmic; that stretch reads MPRHHAGGEE…YNVLERPRGW (125 aa). Serine 88 bears the Phosphoserine mark. A helical membrane pass occupies residues 126–146; sequence AFIYHAFVFLLVFGCLILSVF. Residues 147-156 lie on the Extracellular side of the membrane; that stretch reads STIPEHTKLA. The helical transmembrane segment at 157–177 threads the bilayer; sequence SSCLLILEFVMIVVFGLEFII. Topologically, residues 178-200 are cytoplasmic; sequence RIWSAGCCCRYRGWQGRLRFARK. The helical transmembrane segment at 201–221 threads the bilayer; that stretch reads PFCVIDTIVLIASIAVVSAKT. Residues 222–229 are Extracellular-facing; sequence QGNIFATS. The chain crosses the membrane as a helical; Voltage-sensor span at residues 230–252; the sequence is ALRSLRFLQILRMVRMDRRGGTW. Arginine 248 and lysine 264 together coordinate a 1,2-diacyl-sn-glycero-3-phospho-(1D-myo-inositol-4,5-bisphosphate). The Cytoplasmic segment spans residues 253-266; sequence KLLGSVVYAHSKEL. The chain crosses the membrane as a helical span at residues 267–287; that stretch reads ITAWYIGFLVLIFSSFLVYLV. The Extracellular segment spans residues 288–298; the sequence is EKDANKEFSTY. The segment at residues 299-319 is an intramembrane region (pore-forming); that stretch reads ADALWWGTITLTTIGYGDKTP. At 320-325 the chain is on the extracellular side; the sequence is LTWLGR. A helical transmembrane segment spans residues 326 to 346; that stretch reads LLSAGFALLGISFFALPAGIL. Residues 347–932 lie on the Cytoplasmic side of the membrane; that stretch reads GSGFALKVQE…ALSLPHVKLK (586 aa). A 1,2-diacyl-sn-glycero-3-phospho-(1D-myo-inositol-4,5-bisphosphate) is bound at residue lysine 361. The segment at 370–378 is interaction with CALM; it reads AANLIQCVW. The tract at residues 404–465 is disordered; that stretch reads SPTKKEQGEA…GSPTKVQKSW (62 aa). Residues 431 to 440 show a composition bias toward polar residues; the sequence is RGQSIKSRQA. Serine 447 carries the phosphoserine modification. Residues 521–528 are interaction with CALM; it reads VIRAIRIM. Positions 655 to 678 are disordered; that stretch reads SDYQSPVDSKDLSGSAQNSGCLSR. Position 831 is a phosphoserine (serine 831). Acidic residues predominate over residues 876-885; the sequence is VGPEETETDT. The tract at residues 876 to 919 is disordered; sequence VGPEETETDTFDAAPQPAREAAFASDSLRTGRSRSSQSICKAGE. Positions 888-899 are enriched in low complexity; that stretch reads AAPQPAREAAFA. Polar residues predominate over residues 902–914; that stretch reads SLRTGRSRSSQSI.

This sequence belongs to the potassium channel family. KQT (TC 1.A.1.15) subfamily. Kv7.5/KCNQ5 sub-subfamily. As to quaternary structure, homotetramer; forms a functional homotetrameric channel resulting in the expression of a small M-current. Heterotetramer with KCNQ3; forms heterotetrameric M-channel responsible for the native M-current. Heterotetramer with KCNQ1; forms a functional voltage-gated potassium channel. Interacts (via C-terminus) with calmodulin/CALM1; forms a heterooctameric structure (with 4:4 KCNQ1:CALM stoichiometry); the interaction is calcium-independent, constitutive and participates in the channel function. Strongly expressed in brain and skeletal muscle. In brain, expressed in cerebral cortex, occipital pole, frontal lobe and temporal lobe. Lower levels in hippocampus and putamen. Low to undetectable levels in medulla, cerebellum and thalamus.

It is found in the cell membrane. The enzyme catalyses K(+)(in) = K(+)(out). Its activity is regulated as follows. Phosphatidylinositol-4,5-bisphosphate (PIP2) is essential to activate KCNQ5 channel by inducing the coupling of the voltage-sensing domain (VSD) and the pore-forming domain (PD). Calcium suppresses KCNQ5 channel current through calcium-bound CALM C-terminus. Therefore CALM acts as calcium sensor that controls channel activity. Activated by niflumic acid and the anticonvulsant retigabine. Inhibited by barium, linopirdine, XE991 and tetraethylammonium (as homomer). Insensitive to tetraethylammonium in KCNQ3-KCNQ5 heteromers. In terms of biological role, pore-forming subunit of the voltage-gated potassium (Kv) channel broadly expressed in brain and involved in the regulation of neuronal excitability. Associates with KCNQ3/Kv7.3 pore-forming subunit to form a potassium channel which contributes to M-type current, a slowly activating and deactivating potassium conductance which plays a critical role in determining the subthreshold electrical excitability of neurons. Contributes, with other potassium channels, to the molecular diversity of a heterogeneous population of M-channels, varying in kinetic and pharmacological properties, which underlie this physiologically important current. Also forms a functional channel with KCNQ1/Kv7.1 subunit that may contribute to vasoconstriction and hypertension. Channel may be selectively permeable in vitro to other cations besides potassium, in decreasing order of affinity K(+) = Rb(+) &gt; Cs(+) &gt; Na(+). Similar to the native M-channel, KCNQ3-KCNQ5 potassium channel is suppressed by activation of the muscarinic acetylcholine receptor CHRM1. This Homo sapiens (Human) protein is Potassium voltage-gated channel subfamily KQT member 5.